Here is a 135-residue protein sequence, read N- to C-terminus: Aspartate 1-decarboxylase (135 aa).

Serine 25 functions as the Schiff-base intermediate with substrate; via pyruvic acid in the catalytic mechanism. Serine 25 carries the pyruvic acid (Ser) modification. Threonine 57 is a substrate binding site. Catalysis depends on tyrosine 58, which acts as the Proton donor. 73–75 is a substrate binding site; that stretch reads GAA.

This sequence belongs to the PanD family. Heterooctamer of four alpha and four beta subunits. It depends on pyruvate as a cofactor. Is synthesized initially as an inactive proenzyme, which is activated by self-cleavage at a specific serine bond to produce a beta-subunit with a hydroxyl group at its C-terminus and an alpha-subunit with a pyruvoyl group at its N-terminus.

The protein resides in the cytoplasm. It catalyses the reaction L-aspartate + H(+) = beta-alanine + CO2. Its pathway is cofactor biosynthesis; (R)-pantothenate biosynthesis; beta-alanine from L-aspartate: step 1/1. Its function is as follows. Catalyzes the pyruvoyl-dependent decarboxylation of aspartate to produce beta-alanine. The protein is Aspartate 1-decarboxylase of Mycobacterium sp. (strain JLS).